We begin with the raw amino-acid sequence, 325 residues long: Probable NADH kinase (325 aa).

Belongs to the NAD kinase family. Homodimer.

It localises to the cytoplasm. The catalysed reaction is NADH + ATP = ADP + NADPH + H(+). Functionally, key source of the cellular reductant NADPH which is an important antioxidant factor. The polypeptide is Probable NADH kinase (Oryza sativa subsp. japonica (Rice)).